A 343-amino-acid polypeptide reads, in one-letter code: Protein RecA (343 aa).

Residue 65–72 participates in ATP binding; the sequence is GPESSGKT.

It belongs to the RecA family.

Its subcellular location is the cytoplasm. In terms of biological role, can catalyze the hydrolysis of ATP in the presence of single-stranded DNA, the ATP-dependent uptake of single-stranded DNA by duplex DNA, and the ATP-dependent hybridization of homologous single-stranded DNAs. It interacts with LexA causing its activation and leading to its autocatalytic cleavage. In Xanthomonas campestris pv. campestris (strain 8004), this protein is Protein RecA.